We begin with the raw amino-acid sequence, 297 residues long: ATP synthase subunit gamma, mitochondrial (297 aa).

This sequence belongs to the ATPase gamma chain family. In terms of assembly, F-type ATPases have 2 components, CF(1) - the catalytic core - and CF(0) - the membrane proton channel. CF(1) has five subunits: alpha(3), beta(3), gamma(1), delta(1), epsilon(1). CF(0) has three main subunits: a, b and c.

The protein localises to the mitochondrion. The protein resides in the mitochondrion inner membrane. Functionally, mitochondrial membrane ATP synthase (F(1)F(0) ATP synthase or Complex V) produces ATP from ADP in the presence of a proton gradient across the membrane which is generated by electron transport complexes of the respiratory chain. F-type ATPases consist of two structural domains, F(1) - containing the extramembraneous catalytic core, and F(0) - containing the membrane proton channel, linked together by a central stalk and a peripheral stalk. During catalysis, ATP synthesis in the catalytic domain of F(1) is coupled via a rotary mechanism of the central stalk subunits to proton translocation. Part of the complex F(1) domain and the central stalk which is part of the complex rotary element. The gamma subunit protrudes into the catalytic domain formed of alpha(3)beta(3). Rotation of the central stalk against the surrounding alpha(3)beta(3) subunits leads to hydrolysis of ATP in three separate catalytic sites on the beta subunits. The sequence is that of ATP synthase subunit gamma, mitochondrial from Drosophila melanogaster (Fruit fly).